A 310-amino-acid chain; its full sequence is Homoserine O-acetyltransferase (310 aa).

The Acyl-thioester intermediate role is filled by Cys142. Residues Lys163 and Ser192 each contribute to the substrate site. His235 acts as the Proton acceptor in catalysis. Glu237 is a catalytic residue. Position 249 (Arg249) interacts with substrate.

Belongs to the MetA family.

It localises to the cytoplasm. It catalyses the reaction L-homoserine + acetyl-CoA = O-acetyl-L-homoserine + CoA. It functions in the pathway amino-acid biosynthesis; L-methionine biosynthesis via de novo pathway; O-acetyl-L-homoserine from L-homoserine: step 1/1. Transfers an acetyl group from acetyl-CoA to L-homoserine, forming acetyl-L-homoserine. This chain is Homoserine O-acetyltransferase, found in Parabacteroides distasonis (strain ATCC 8503 / DSM 20701 / CIP 104284 / JCM 5825 / NCTC 11152).